A 594-amino-acid polypeptide reads, in one-letter code: 4-alpha-glucanotransferase DPE1, chloroplastic/amyloplastic (594 aa).

Residues 1–37 (MATLSLPLPHLTQAIPARARPRPRPLRGIPARLLSCR) constitute a chloroplast transit peptide.

Belongs to the disproportionating enzyme family.

It is found in the plastid. It localises to the chloroplast. The protein localises to the amyloplast. The catalysed reaction is Transfers a segment of a (1-&gt;4)-alpha-D-glucan to a new position in an acceptor, which may be glucose or a (1-&gt;4)-alpha-D-glucan.. Functionally, chloroplastic alpha-glucanotransferase involved in maltotriose metabolism. This is 4-alpha-glucanotransferase DPE1, chloroplastic/amyloplastic (DPE1) from Oryza sativa subsp. japonica (Rice).